The primary structure comprises 716 residues: Probable extracellular serine carboxypeptidase (716 aa).

The signal sequence occupies residues Met1–Ala17. N-linked (GlcNAc...) asparagine glycosylation is found at Asn143 and Asn174. Residue Ser188 is the Charge relay system of the active site. N-linked (GlcNAc...) asparagine glycans are attached at residues Asn258 and Asn354. Residue Asp466 is the Charge relay system of the active site. Residues Asn507 and Asn550 are each glycosylated (N-linked (GlcNAc...) asparagine). Residues Arg617 to Ser636 form a disordered region. A helical transmembrane segment spans residues Leu652 to Glu672.

Belongs to the peptidase S28 family.

The protein localises to the membrane. It localises to the secreted. This chain is Probable extracellular serine carboxypeptidase, found in Arthroderma benhamiae (strain ATCC MYA-4681 / CBS 112371) (Trichophyton mentagrophytes).